A 318-amino-acid polypeptide reads, in one-letter code: Ferrochelatase (318 aa).

Residues His186 and Glu264 each contribute to the Fe cation site.

Belongs to the ferrochelatase family.

Its subcellular location is the cytoplasm. It carries out the reaction heme b + 2 H(+) = protoporphyrin IX + Fe(2+). The protein operates within porphyrin-containing compound metabolism; protoheme biosynthesis; protoheme from protoporphyrin-IX: step 1/1. Its function is as follows. Catalyzes the ferrous insertion into protoporphyrin IX. The polypeptide is Ferrochelatase (Chlamydia abortus (strain DSM 27085 / S26/3) (Chlamydophila abortus)).